We begin with the raw amino-acid sequence, 87 residues long: Small ribosomal subunit protein bS20 (87 aa).

The interval 1–22 is disordered; that stretch reads MANHKSALKRHKQSLKRAARNR.

The protein belongs to the bacterial ribosomal protein bS20 family.

Its function is as follows. Binds directly to 16S ribosomal RNA. This Nitratidesulfovibrio vulgaris (strain DP4) (Desulfovibrio vulgaris) protein is Small ribosomal subunit protein bS20.